The chain runs to 325 residues: Interleukin-10 receptor subunit beta (325 aa).

An N-terminal signal peptide occupies residues 1–19; that stretch reads MAWSLGSWLGGCLLVSALG. Over 20–220 the chain is Extracellular; that stretch reads MVPPPENVRM…QTTHDETVPS (201 aa). 2 Fibronectin type-III domains span residues 23-111 and 114-216; these read PPEN…VDDT and GPPG…THDE. 4 N-linked (GlcNAc...) asparagine glycosylation sites follow: Asn49, Asn68, Asn102, and Asn161. An intrachain disulfide couples Cys66 to Cys74. A disulfide bond links Cys188 and Cys209. The helical transmembrane segment at 221–242 threads the bilayer; sequence WMVAVILMASVFMVCLALLGCF. Residues 243 to 325 lie on the Cytoplasmic side of the membrane; the sequence is ALLWCVYKKT…GTPPGQGPQS (83 aa). The tract at residues 301–325 is disordered; sequence DSESGKQNPGDSCSLGTPPGQGPQS. Residues 305–315 show a composition bias toward polar residues; it reads GKQNPGDSCSL.

Belongs to the type II cytokine receptor family. In terms of assembly, heterodimer with IFNLR1.

It localises to the membrane. Shared cell surface receptor required for the activation of five class 2 cytokines: IL10, IL22, IL26, IL28, and IFNL1. The IFNLR1/IL10RB dimer is a receptor for the cytokine ligands IFNL2 and IFNL3 and mediates their antiviral activity. The ligand/receptor complex stimulate the activation of the JAK/STAT signaling pathway leading to the expression of IFN-stimulated genes (ISG), which contribute to the antiviral state. This Homo sapiens (Human) protein is Interleukin-10 receptor subunit beta (IL10RB).